We begin with the raw amino-acid sequence, 293 residues long: MTENNDIKMVIITGMSGAGKTVALQSFEDLGYFCVDNLPPMLLPKFIELMADSKGKMNKVALGIDLRGREFFEHLWEALDDLSERTWIIPHILFLDAKDSTLVTRYKETRRSHPLAPTGLPLKGIEAERNLLTDMKARANIVLDTSDLKPKELREKIVHLFSTETEQAFRVNVMSFGFKYGIPIDADLVFDVRFLPNPYYIPHMKPLTGLDEEVSSYVLKFNETHKFLEKLTDLITFMLPHYKREGKSQLVIAIGCTGGQHRSVTLTEYLGKHLKPEYSVHVSHRDVEKRKGH.

Residue 14-21 (GMSGAGKT) coordinates ATP. 65-68 (DLRG) serves as a coordination point for GTP.

It belongs to the RapZ-like family.

Functionally, displays ATPase and GTPase activities. In Bacillus cereus (strain Q1), this protein is Nucleotide-binding protein BCQ_4976.